Consider the following 643-residue polypeptide: Lysophospholipase ARB_05919 (643 aa).

An N-terminal signal peptide occupies residues 1–22; the sequence is MMFIPATLGTFVLASLLPATVG. The region spanning 50 to 597 is the PLA2c domain; that stretch reads DCPSTKPAVR…KMYCWDGTLN (548 aa). N-linked (GlcNAc...) asparagine glycosylation is found at N142, N176, N195, N293, N466, N472, N482, N503, N524, N533, N552, and N597.

Belongs to the lysophospholipase family.

The protein localises to the secreted. It catalyses the reaction a 1-acyl-sn-glycero-3-phosphocholine + H2O = sn-glycerol 3-phosphocholine + a fatty acid + H(+). Its function is as follows. Catalyzes the release of fatty acids from lysophospholipids. Phospholipase B may well contribute to pathogenicity by abetting the fungus in damaging host cell membranes. The polypeptide is Lysophospholipase ARB_05919 (Arthroderma benhamiae (strain ATCC MYA-4681 / CBS 112371) (Trichophyton mentagrophytes)).